A 362-amino-acid polypeptide reads, in one-letter code: Leucoanthocyanidin dioxygenase (362 aa).

Residues 211 to 313 enclose the Fe2OG dioxygenase domain; the sequence is MEELLLQKKI…RISWAVFCEP (103 aa). Residues histidine 238, aspartate 240, and histidine 294 each contribute to the Fe cation site.

This sequence belongs to the iron/ascorbate-dependent oxidoreductase family. Fe cation serves as cofactor. Requires L-ascorbate as cofactor.

The enzyme catalyses a (2R,3S,4S)-leucoanthocyanidin + 2-oxoglutarate + O2 = a 4-H-anthocyanidin with a 3-hydroxy group + succinate + CO2 + 2 H2O. It participates in pigment biosynthesis; anthocyanin biosynthesis. Its function is as follows. Oxidation of leucoanthocyanidins into anthocyanidins. In Vitis vinifera (Grape), this protein is Leucoanthocyanidin dioxygenase.